The following is a 213-amino-acid chain: Ribonuclease T (213 aa).

One can recognise an Exonuclease domain in the interval Val28–Phe202. Mg(2+) contacts are provided by Asp31, Glu33, His189, and Asp194. His189 (proton donor/acceptor) is an active-site residue.

It belongs to the RNase T family. Homodimer. Requires Mg(2+) as cofactor.

Functionally, trims short 3' overhangs of a variety of RNA species, leaving a one or two nucleotide 3' overhang. Responsible for the end-turnover of tRNA: specifically removes the terminal AMP residue from uncharged tRNA (tRNA-C-C-A). Also appears to be involved in tRNA biosynthesis. This chain is Ribonuclease T, found in Xanthomonas euvesicatoria pv. vesicatoria (strain 85-10) (Xanthomonas campestris pv. vesicatoria).